The following is a 198-amino-acid chain: Urease accessory protein UreE (198 aa).

The disordered stretch occupies residues 137–198; sequence ARGAYHSPGG…RGHDHDHKHD (62 aa). The segment covering 149–198 has biased composition (basic and acidic residues); sequence HGHDHDHNHDHGHDHAHDHNHGHDHDHEHGYEHEHEHRHDRGHDHDHKHD.

The protein belongs to the UreE family.

The protein localises to the cytoplasm. In terms of biological role, involved in urease metallocenter assembly. Binds nickel. Probably functions as a nickel donor during metallocenter assembly. This chain is Urease accessory protein UreE, found in Rhizobium johnstonii (strain DSM 114642 / LMG 32736 / 3841) (Rhizobium leguminosarum bv. viciae).